The sequence spans 279 residues: Ribosomal RNA small subunit methyltransferase A (279 aa).

Residues histidine 15, leucine 17, glycine 42, glutamate 64, aspartate 89, and asparagine 109 each contribute to the S-adenosyl-L-methionine site.

Belongs to the class I-like SAM-binding methyltransferase superfamily. rRNA adenine N(6)-methyltransferase family. RsmA subfamily.

Its subcellular location is the cytoplasm. It catalyses the reaction adenosine(1518)/adenosine(1519) in 16S rRNA + 4 S-adenosyl-L-methionine = N(6)-dimethyladenosine(1518)/N(6)-dimethyladenosine(1519) in 16S rRNA + 4 S-adenosyl-L-homocysteine + 4 H(+). Specifically dimethylates two adjacent adenosines (A1518 and A1519) in the loop of a conserved hairpin near the 3'-end of 16S rRNA in the 30S particle. May play a critical role in biogenesis of 30S subunits. This Prochlorococcus marinus (strain SARG / CCMP1375 / SS120) protein is Ribosomal RNA small subunit methyltransferase A.